A 492-amino-acid chain; its full sequence is Serine carboxypeptidase-like 31 (492 aa).

A signal peptide spans 1-30 (MDNYQTKNISNLLTSLCFTTLLILAPVVIC). 3 cysteine pairs are disulfide-bonded: Cys105-Cys376, Cys270-Cys283, and Cys307-Cys344. The N-linked (GlcNAc...) asparagine glycan is linked to Asn156. Ser198 is a catalytic residue. Asn221 and Asn271 each carry an N-linked (GlcNAc...) asparagine glycan. 2 N-linked (GlcNAc...) asparagine glycosylation sites follow: Asn372 and Asn383. Residues Asp413 and His465 contribute to the active site.

Belongs to the peptidase S10 family. In terms of tissue distribution, expressed in roots, senescent leaves, stems, flowers and siliques.

The protein localises to the secreted. Functionally, probable carboxypeptidase. This chain is Serine carboxypeptidase-like 31 (SCPL31), found in Arabidopsis thaliana (Mouse-ear cress).